The following is a 274-amino-acid chain: NH(3)-dependent NAD(+) synthetase (274 aa).

46-53 (GISGGQDS) is an ATP binding site. A Mg(2+)-binding site is contributed by D52. R140 provides a ligand contact to deamido-NAD(+). T160 contributes to the ATP binding site. E165 contacts Mg(2+). Residues K173 and D180 each coordinate deamido-NAD(+). Residues K189 and T211 each contribute to the ATP site. Residue 260-261 (HK) coordinates deamido-NAD(+).

Belongs to the NAD synthetase family. As to quaternary structure, homodimer.

The catalysed reaction is deamido-NAD(+) + NH4(+) + ATP = AMP + diphosphate + NAD(+) + H(+). It functions in the pathway cofactor biosynthesis; NAD(+) biosynthesis; NAD(+) from deamido-NAD(+) (ammonia route): step 1/1. Functionally, catalyzes the ATP-dependent amidation of deamido-NAD to form NAD. Uses ammonia as a nitrogen source. This is NH(3)-dependent NAD(+) synthetase from Streptococcus equi subsp. equi (strain 4047).